A 133-amino-acid chain; its full sequence is UPF0344 protein SH1980 (133 aa).

Helical transmembrane passes span 1-21, 42-62, 71-91, and 103-123; these read MLHM…IAFL, VFML…FMAA, MLLT…EVSI, and LFWA…ILPW.

The protein belongs to the UPF0344 family.

The protein localises to the cell membrane. This Staphylococcus haemolyticus (strain JCSC1435) protein is UPF0344 protein SH1980.